A 132-amino-acid chain; its full sequence is Small ribosomal subunit protein uS11 (132 aa).

This sequence belongs to the universal ribosomal protein uS11 family. In terms of assembly, part of the 30S ribosomal subunit. Interacts with proteins S7 and S18. Binds to IF-3.

Located on the platform of the 30S subunit, it bridges several disparate RNA helices of the 16S rRNA. Forms part of the Shine-Dalgarno cleft in the 70S ribosome. The polypeptide is Small ribosomal subunit protein uS11 (Legionella pneumophila (strain Paris)).